A 387-amino-acid chain; its full sequence is Decapping nuclease RAI1 (387 aa).

E172 serves as a coordination point for a divalent metal cation. S198 is subject to Phosphoserine. E221 lines the substrate pocket. A divalent metal cation is bound by residues D223, E241, and L242. K243 and Q267 together coordinate substrate. The segment at I273–K387 is interaction with RAT1.

It belongs to the DXO/Dom3Z family. Interacts with RAT1, RTT103 and pre-60S ribosomal subunits. Interacts with RAT1; the interaction is direct, stabilizes RAT1 protein structure and stimulates its exoribonuclease activity. The interaction also stimulates RAI1 pyrophosphohydrolase activity, probably by recruiting it to mRNA substrates. The cofactor is a divalent metal cation.

The protein resides in the nucleus. The catalysed reaction is a 5'-end NAD(+)-phospho-ribonucleoside in mRNA + H2O = a 5'-end phospho-ribonucleoside in mRNA + NAD(+) + H(+). The enzyme catalyses a 5'-end (N(7)-methyl 5'-triphosphoguanosine)-ribonucleoside-ribonucleotide in mRNA + H2O = a (N(7)-methyl 5'-triphosphoguanosine)-nucleoside + a 5'-end phospho-ribonucleoside in mRNA + H(+). It catalyses the reaction a 5'-end triphospho-ribonucleoside in mRNA + H2O = a 5'-end phospho-ribonucleoside in mRNA + diphosphate + H(+). Functionally, decapping enzyme for NAD-capped RNAs: specifically hydrolyzes the nicotinamide adenine dinucleotide (NAD) cap from a subset of RNAs by removing the entire NAD moiety from the 5'-end of an NAD-capped RNA. The NAD-cap is present at the 5'-end of some RNAs and snoRNAs. In contrast to the canonical 5'-end N7 methylguanosine (m7G) cap, the NAD cap promotes mRNA decay. Also acts as a non-canonical decapping enzyme that removes the entire cap structure of m7G capped or incompletely capped RNAs. Has decapping activity toward incomplete 5'-end m7G cap mRNAs such as unmethylated 5'-end-capped RNA (cap0), while it has no activity toward 2'-O-ribose methylated m7G cap (cap1). Also possesses RNA 5'-pyrophosphohydrolase activity by hydrolyzing the 5'-end triphosphate to release pyrophosphates. Stimulates exoribonuclease activity of RAT1, allowing it to degrade RNAs with stable secondary structure more effectively. Required for the processing of nuclear mRNA and rRNA precursors. May promote termination of transcription by RNA polymerase II. In Saccharomyces cerevisiae (strain ATCC 204508 / S288c) (Baker's yeast), this protein is Decapping nuclease RAI1.